The following is a 418-amino-acid chain: Glutamyl-tRNA reductase (418 aa).

Substrate is bound by residues 49-52, S109, 114-116, and Q120; these read TCNR and EPQ. Catalysis depends on C50, which acts as the Nucleophile. Residue 189–194 coordinates NADP(+); that stretch reads GAGETI.

The protein belongs to the glutamyl-tRNA reductase family. In terms of assembly, homodimer.

The enzyme catalyses (S)-4-amino-5-oxopentanoate + tRNA(Glu) + NADP(+) = L-glutamyl-tRNA(Glu) + NADPH + H(+). The protein operates within porphyrin-containing compound metabolism; protoporphyrin-IX biosynthesis; 5-aminolevulinate from L-glutamyl-tRNA(Glu): step 1/2. Its function is as follows. Catalyzes the NADPH-dependent reduction of glutamyl-tRNA(Glu) to glutamate 1-semialdehyde (GSA). This is Glutamyl-tRNA reductase from Salmonella choleraesuis (strain SC-B67).